We begin with the raw amino-acid sequence, 391 residues long: Pyridinium-3,5-bisthiocarboxylic acid mononucleotide nickel insertion protein (391 aa).

Belongs to the LarC family.

The catalysed reaction is Ni(II)-pyridinium-3,5-bisthiocarboxylate mononucleotide = pyridinium-3,5-bisthiocarboxylate mononucleotide + Ni(2+). Involved in the biosynthesis of a nickel-pincer cofactor ((SCS)Ni(II) pincer complex). Binds Ni(2+), and functions in nickel delivery to pyridinium-3,5-bisthiocarboxylic acid mononucleotide (P2TMN), to form the mature cofactor. Is thus probably required for the activation of nickel-pincer cofactor-dependent enzymes. The protein is Pyridinium-3,5-bisthiocarboxylic acid mononucleotide nickel insertion protein of Staphylococcus saprophyticus subsp. saprophyticus (strain ATCC 15305 / DSM 20229 / NCIMB 8711 / NCTC 7292 / S-41).